A 316-amino-acid polypeptide reads, in one-letter code: ATP synthase gamma chain (316 aa).

The protein belongs to the ATPase gamma chain family. As to quaternary structure, F-type ATPases have 2 components, CF(1) - the catalytic core - and CF(0) - the membrane proton channel. CF(1) has five subunits: alpha(3), beta(3), gamma(1), delta(1), epsilon(1). CF(0) has three main subunits: a, b and c.

It is found in the cellular thylakoid membrane. Produces ATP from ADP in the presence of a proton gradient across the membrane. The gamma chain is believed to be important in regulating ATPase activity and the flow of protons through the CF(0) complex. This is ATP synthase gamma chain from Parasynechococcus marenigrum (strain WH8102).